Reading from the N-terminus, the 365-residue chain is 3-isopropylmalate dehydrogenase (365 aa).

The substrate site is built by Arg96, Arg106, Arg134, and Asp224. Asp224, Asp248, and Asp252 together coordinate Mg(2+). 288–300 lines the NAD(+) pocket; that stretch reads GSAPTIAKQNIAN.

Belongs to the isocitrate and isopropylmalate dehydrogenases family. LeuB type 1 subfamily. As to quaternary structure, homodimer. Mg(2+) serves as cofactor. Mn(2+) is required as a cofactor.

Its subcellular location is the cytoplasm. The catalysed reaction is (2R,3S)-3-isopropylmalate + NAD(+) = 4-methyl-2-oxopentanoate + CO2 + NADH. Its pathway is amino-acid biosynthesis; L-leucine biosynthesis; L-leucine from 3-methyl-2-oxobutanoate: step 3/4. Functionally, catalyzes the oxidation of 3-carboxy-2-hydroxy-4-methylpentanoate (3-isopropylmalate) to 3-carboxy-4-methyl-2-oxopentanoate. The product decarboxylates to 4-methyl-2 oxopentanoate. The polypeptide is 3-isopropylmalate dehydrogenase (Dehalococcoides mccartyi (strain CBDB1)).